Here is a 145-residue protein sequence, read N- to C-terminus: D-aminoacyl-tRNA deacylase (145 aa).

Residues 137–138 (GP) carry the Gly-cisPro motif, important for rejection of L-amino acids motif.

It belongs to the DTD family. Homodimer.

Its subcellular location is the cytoplasm. The enzyme catalyses glycyl-tRNA(Ala) + H2O = tRNA(Ala) + glycine + H(+). The catalysed reaction is a D-aminoacyl-tRNA + H2O = a tRNA + a D-alpha-amino acid + H(+). In terms of biological role, an aminoacyl-tRNA editing enzyme that deacylates mischarged D-aminoacyl-tRNAs. Also deacylates mischarged glycyl-tRNA(Ala), protecting cells against glycine mischarging by AlaRS. Acts via tRNA-based rather than protein-based catalysis; rejects L-amino acids rather than detecting D-amino acids in the active site. By recycling D-aminoacyl-tRNA to D-amino acids and free tRNA molecules, this enzyme counteracts the toxicity associated with the formation of D-aminoacyl-tRNA entities in vivo and helps enforce protein L-homochirality. This Pseudomonas fluorescens (strain ATCC BAA-477 / NRRL B-23932 / Pf-5) protein is D-aminoacyl-tRNA deacylase.